A 440-amino-acid chain; its full sequence is Thymidine phosphorylase (440 aa).

Belongs to the thymidine/pyrimidine-nucleoside phosphorylase family. In terms of assembly, homodimer.

It catalyses the reaction thymidine + phosphate = 2-deoxy-alpha-D-ribose 1-phosphate + thymine. Its pathway is pyrimidine metabolism; dTMP biosynthesis via salvage pathway; dTMP from thymine: step 1/2. Functionally, the enzymes which catalyze the reversible phosphorolysis of pyrimidine nucleosides are involved in the degradation of these compounds and in their utilization as carbon and energy sources, or in the rescue of pyrimidine bases for nucleotide synthesis. The protein is Thymidine phosphorylase of Yersinia pestis.